The sequence spans 269 residues: Imidazole glycerol phosphate synthase subunit HisF (269 aa).

Residues Asp23 and Asp142 contribute to the active site.

Belongs to the HisA/HisF family. Heterodimer of HisH and HisF.

The protein localises to the cytoplasm. It catalyses the reaction 5-[(5-phospho-1-deoxy-D-ribulos-1-ylimino)methylamino]-1-(5-phospho-beta-D-ribosyl)imidazole-4-carboxamide + L-glutamine = D-erythro-1-(imidazol-4-yl)glycerol 3-phosphate + 5-amino-1-(5-phospho-beta-D-ribosyl)imidazole-4-carboxamide + L-glutamate + H(+). The protein operates within amino-acid biosynthesis; L-histidine biosynthesis; L-histidine from 5-phospho-alpha-D-ribose 1-diphosphate: step 5/9. In terms of biological role, IGPS catalyzes the conversion of PRFAR and glutamine to IGP, AICAR and glutamate. The HisF subunit catalyzes the cyclization activity that produces IGP and AICAR from PRFAR using the ammonia provided by the HisH subunit. The polypeptide is Imidazole glycerol phosphate synthase subunit HisF (Bordetella pertussis (strain Tohama I / ATCC BAA-589 / NCTC 13251)).